Reading from the N-terminus, the 405-residue chain is Cytoplasmic tRNA 2-thiolation protein 2 (405 aa).

The protein belongs to the CTU2/NCS2 family.

Its subcellular location is the cytoplasm. Its pathway is tRNA modification; 5-methoxycarbonylmethyl-2-thiouridine-tRNA biosynthesis. Plays a central role in 2-thiolation of mcm(5)S(2)U at tRNA wobble positions of tRNA(Lys), tRNA(Glu) and tRNA(Gln). May act by forming a heterodimer with NCS6/CTU1 that ligates sulfur from thiocarboxylated URM1 onto the uridine of tRNAs at wobble position. The polypeptide is Cytoplasmic tRNA 2-thiolation protein 2 (Drosophila persimilis (Fruit fly)).